A 178-amino-acid chain; its full sequence is Crossover junction endodeoxyribonuclease RuvC (178 aa).

Residues Asp11, Glu71, and Asp143 contribute to the active site. Residues Asp11, Glu71, and Asp143 each contribute to the Mg(2+) site.

It belongs to the RuvC family. As to quaternary structure, homodimer which binds Holliday junction (HJ) DNA. The HJ becomes 2-fold symmetrical on binding to RuvC with unstacked arms; it has a different conformation from HJ DNA in complex with RuvA. In the full resolvosome a probable DNA-RuvA(4)-RuvB(12)-RuvC(2) complex forms which resolves the HJ. It depends on Mg(2+) as a cofactor.

It localises to the cytoplasm. The catalysed reaction is Endonucleolytic cleavage at a junction such as a reciprocal single-stranded crossover between two homologous DNA duplexes (Holliday junction).. Its function is as follows. The RuvA-RuvB-RuvC complex processes Holliday junction (HJ) DNA during genetic recombination and DNA repair. Endonuclease that resolves HJ intermediates. Cleaves cruciform DNA by making single-stranded nicks across the HJ at symmetrical positions within the homologous arms, yielding a 5'-phosphate and a 3'-hydroxyl group; requires a central core of homology in the junction. The consensus cleavage sequence is 5'-(A/T)TT(C/G)-3'. Cleavage occurs on the 3'-side of the TT dinucleotide at the point of strand exchange. HJ branch migration catalyzed by RuvA-RuvB allows RuvC to scan DNA until it finds its consensus sequence, where it cleaves and resolves the cruciform DNA. The chain is Crossover junction endodeoxyribonuclease RuvC from Neisseria meningitidis serogroup C / serotype 2a (strain ATCC 700532 / DSM 15464 / FAM18).